A 379-amino-acid polypeptide reads, in one-letter code: Carbamoyl phosphate synthase small chain (379 aa).

The CPSase stretch occupies residues 1–189; the sequence is MSKSALLVLE…GLPEAKDDSE (189 aa). L-glutamine contacts are provided by Ser47, Gly241, and Gly243. Positions 193–379 constitute a Glutamine amidotransferase type-1 domain; the sequence is HVVAYDFGAK…FIELIKQHSA (187 aa). The active-site Nucleophile is Cys269. The L-glutamine site is built by Leu270, Gln273, Asn311, Gly313, and Phe314. Active-site residues include His353 and Glu355.

This sequence belongs to the CarA family. Composed of two chains; the small (or glutamine) chain promotes the hydrolysis of glutamine to ammonia, which is used by the large (or ammonia) chain to synthesize carbamoyl phosphate. Tetramer of heterodimers (alpha,beta)4.

It catalyses the reaction hydrogencarbonate + L-glutamine + 2 ATP + H2O = carbamoyl phosphate + L-glutamate + 2 ADP + phosphate + 2 H(+). It carries out the reaction L-glutamine + H2O = L-glutamate + NH4(+). Its pathway is amino-acid biosynthesis; L-arginine biosynthesis; carbamoyl phosphate from bicarbonate: step 1/1. It functions in the pathway pyrimidine metabolism; UMP biosynthesis via de novo pathway; (S)-dihydroorotate from bicarbonate: step 1/3. Small subunit of the glutamine-dependent carbamoyl phosphate synthetase (CPSase). CPSase catalyzes the formation of carbamoyl phosphate from the ammonia moiety of glutamine, carbonate, and phosphate donated by ATP, constituting the first step of 2 biosynthetic pathways, one leading to arginine and/or urea and the other to pyrimidine nucleotides. The small subunit (glutamine amidotransferase) binds and cleaves glutamine to supply the large subunit with the substrate ammonia. This Vibrio vulnificus (strain YJ016) protein is Carbamoyl phosphate synthase small chain.